The primary structure comprises 379 residues: Botryococcene C-methyltransferase (379 aa).

Residues 17–37 (LLTWKGAAGLAAAVALGYIII) traverse the membrane as a helical segment.

It belongs to the class I-like SAM-binding methyltransferase superfamily. Erg6/SMT family.

The protein localises to the microsome membrane. It carries out the reaction C30 botryococcene + 2 S-adenosyl-L-methionine = 3,20-dimethyl-1,2,21,22-tetradehydro-2,3,20,21-tetrahydrobotryococcene + 2 S-adenosyl-L-homocysteine + 2 H(+). Its function is as follows. Converts botryococcene to mono- and dimethyl derivatives, but not to tri- and tetramethylated products. Unable to methylate cycloartenol, zymosterol or lanosterol, but can also use squalene as substrate. Methylates both C-3 and C22 positions, but only C-3 position in monomethylated squalenes. In contrast, monomethylated botryococcene occured mainly at the C-20 position yielding showacene, but also at the C-3 position yielding isoshowacene. This Botryococcus braunii (Green alga) protein is Botryococcene C-methyltransferase (TMT-3).